The primary structure comprises 284 residues: Tryptophan 2,3-dioxygenase (284 aa).

Residues 53 to 57, Y115, and R119 contribute to the substrate site; that span reads FIVQH. H242 serves as a coordination point for heme. T256 contacts substrate.

This sequence belongs to the tryptophan 2,3-dioxygenase family. As to quaternary structure, homotetramer. Heme is required as a cofactor.

The enzyme catalyses L-tryptophan + O2 = N-formyl-L-kynurenine. It participates in amino-acid degradation; L-tryptophan degradation via kynurenine pathway; L-kynurenine from L-tryptophan: step 1/2. Functionally, heme-dependent dioxygenase that catalyzes the oxidative cleavage of the L-tryptophan (L-Trp) pyrrole ring and converts L-tryptophan to N-formyl-L-kynurenine. Catalyzes the oxidative cleavage of the indole moiety. This chain is Tryptophan 2,3-dioxygenase, found in Bordetella pertussis (strain Tohama I / ATCC BAA-589 / NCTC 13251).